A 452-amino-acid chain; its full sequence is Sulfide:quinone oxidoreductase, mitochondrial (452 aa).

FAD contacts are provided by residues 54–55 (AG), E77, Q85, and V120. The Cysteine persulfide intermediate role is filled by C204. C204 and C380 are joined by a disulfide. Residues D337 and 345 to 348 (KTAA) each bind FAD. Residue C380 is the Cysteine persulfide intermediate of the active site.

The protein belongs to the SQRD family. It depends on FAD as a cofactor.

Its subcellular location is the mitochondrion. The catalysed reaction is ubiquinone-10 + hydrogen sulfide + sulfite + 2 H(+) = ubiquinol-10 + thiosulfate. It catalyses the reaction a quinone + hydrogen sulfide + glutathione + H(+) = S-sulfanylglutathione + a quinol. Its function is as follows. Catalyzes the oxidation of hydrogen sulfide, with the help of a quinone. This is Sulfide:quinone oxidoreductase, mitochondrial from Dictyostelium discoideum (Social amoeba).